The chain runs to 253 residues: MNDLLLENLFGEKALCAQVTRDQLLEIIAAGARSKFPKSLLSMYRVTPRVMTRYPLKLITNESITGVVITTVYNLKKNLNIPQNNKLTTQDIERYYLDKSVEVINLMVGNTSLGDLACGRPRRTKSSKKKDPVIFLGISAPLILVMNSKKSINTYIQDKKSDPSSDYVNINPGIGVLENYGNTYLLDIHNPSSVLTISTIYGLDNNMELKKLSTASEIDAYQDVNIGKSVDLKKFNEIFNTMKKHLSLSNFSI.

Residues 1–31 constitute a propeptide that is removed on maturation; the sequence is MNDLLLENLFGEKALCAQVTRDQLLEIIAAG.

The protein belongs to the chordopoxvirinae VP8 family. In terms of processing, undergoes morphogenesis-associated proteolysis which cleaves the 28 kDa to a 25-kDa product. Proteolytic cleavage of major core proteins P4a (A10L), P4b (A3L), and VP8 (L4R), which occurs at a late stage of core formation, is required for production of infectious mature virions (MV).

The protein localises to the virion. In terms of biological role, major core structural protein. In Vertebrata (FPV), this protein is Core protein VP8.